We begin with the raw amino-acid sequence, 261 residues long: Sulfur carrier protein FdhD (261 aa).

Cys105 acts as the Cysteine persulfide intermediate in catalysis. A Mo-bis(molybdopterin guanine dinucleotide)-binding site is contributed by 245 to 250; the sequence is FIRGDR.

It belongs to the FdhD family.

The protein localises to the cytoplasm. Its function is as follows. Required for formate dehydrogenase (FDH) activity. Acts as a sulfur carrier protein that transfers sulfur from IscS to the molybdenum cofactor prior to its insertion into FDH. This is Sulfur carrier protein FdhD from Listeria innocua serovar 6a (strain ATCC BAA-680 / CLIP 11262).